Consider the following 194-residue polypeptide: HTH-type transcriptional regulator BetI (194 aa).

An HTH tetR-type domain is found at 8–68; the sequence is EIRRAQLIDA…ATMRHVLRDL (61 aa). Positions 31 to 50 form a DNA-binding region, H-T-H motif; that stretch reads TLASVAQRANISTGIVSHYF.

The protein operates within amine and polyamine biosynthesis; betaine biosynthesis via choline pathway [regulation]. Functionally, repressor involved in the biosynthesis of the osmoprotectant glycine betaine. It represses transcription of the choline transporter BetT and the genes of BetAB involved in the synthesis of glycine betaine. This is HTH-type transcriptional regulator BetI from Burkholderia cenocepacia (strain HI2424).